A 355-amino-acid polypeptide reads, in one-letter code: Phenylalanine--tRNA ligase alpha subunit (355 aa).

Glu273 provides a ligand contact to Mg(2+).

Belongs to the class-II aminoacyl-tRNA synthetase family. Phe-tRNA synthetase alpha subunit type 1 subfamily. As to quaternary structure, tetramer of two alpha and two beta subunits. Requires Mg(2+) as cofactor.

Its subcellular location is the cytoplasm. The catalysed reaction is tRNA(Phe) + L-phenylalanine + ATP = L-phenylalanyl-tRNA(Phe) + AMP + diphosphate + H(+). This chain is Phenylalanine--tRNA ligase alpha subunit, found in Bifidobacterium animalis subsp. lactis (strain AD011).